The chain runs to 1425 residues: Nephrocystin-4 (1425 aa).

Residue Ser-145 is modified to Phosphoserine. The interval 448-554 (FSLSSDGPTE…VSHLEADLSQ (107 aa)) is disordered. Composition is skewed to low complexity over residues 473–484 (PASPSGTPAPAA) and 507–530 (SPLS…SQSP). A sufficient for basal bodies localization region spans residues 822–1425 (LTLANVGHAC…ETFCVKVLYQ (604 aa)).

The protein belongs to the NPHP4 family. In terms of assembly, interacts with NPHP1 and RPGRIP1L/NPHP8; NPHP1, NPHP4 and RPGRIP1L are proposed to form a functional NPHP1-4-8 module localized to cell-cell contacts and the ciliary transition zone; NPHP4 mediates the interaction between NPHP1 and RPGRIP1L. Interacts with IQCB1/NPHP5; the interaction likely requires additional interactors. Interacts with RPGRIP1, CEP164, JADE1, PALS1, INADL, PARD6A, INVS, DVL2. Interacts with INTU; INTU mediates the interaction between NPHP4 and DAAM1. Interacts with JADE1. Interacts with SPATA7. As to expression, expressed in the retina (at protein level).

It localises to the cytoplasm. It is found in the cytoskeleton. The protein resides in the cilium basal body. Its subcellular location is the microtubule organizing center. The protein localises to the centrosome. It localises to the cell junction. It is found in the tight junction. Its function is as follows. Involved in the organization of apical junctions; the function is proposed to implicate a NPHP1-4-8 module. Does not seem to be strictly required for ciliogenesis. Required for building functional cilia. Involved in the organization of the subapical actin network in multiciliated epithelial cells. Seems to recruit INT to basal bodies of motile cilia which subsequently interacts with actin-modifying proteins such as DAAM1. In cooperation with INVS may down-regulate the canonical Wnt pathway and promote the Wnt-PCP pathway by regulating expression and subcellular location of disheveled proteins. Stabilizes protein levels of JADE1 and promotes its translocation to the nucleus leading to cooperative inhibition of canonical Wnt signaling. Acts as negative regulator of the hippo pathway by association with LATS1 and modifying LATS1-dependent phosphorylation and localization of WWTR1/TAZ. In Mus musculus (Mouse), this protein is Nephrocystin-4 (Nphp4).